The following is a 385-amino-acid chain: Lipid-A-disaccharide synthase (385 aa).

The protein belongs to the LpxB family.

It carries out the reaction a lipid X + a UDP-2-N,3-O-bis[(3R)-3-hydroxyacyl]-alpha-D-glucosamine = a lipid A disaccharide + UDP + H(+). It functions in the pathway bacterial outer membrane biogenesis; LPS lipid A biosynthesis. Functionally, condensation of UDP-2,3-diacylglucosamine and 2,3-diacylglucosamine-1-phosphate to form lipid A disaccharide, a precursor of lipid A, a phosphorylated glycolipid that anchors the lipopolysaccharide to the outer membrane of the cell. This chain is Lipid-A-disaccharide synthase, found in Xylella fastidiosa (strain M23).